A 382-amino-acid polypeptide reads, in one-letter code: D-galactonate dehydratase (382 aa).

D183 is a binding site for Mg(2+). H185 (proton donor) is an active-site residue. E209 and E235 together coordinate Mg(2+). Catalysis depends on H285, which acts as the Proton acceptor. Positions 361–382 (NENPPDWRNPVWRHSDGSIAEW) are disordered.

It belongs to the mandelate racemase/muconate lactonizing enzyme family. GalD subfamily. Requires Mg(2+) as cofactor.

It catalyses the reaction D-galactonate = 2-dehydro-3-deoxy-D-galactonate + H2O. The protein operates within carbohydrate acid metabolism; D-galactonate degradation; D-glyceraldehyde 3-phosphate and pyruvate from D-galactonate: step 1/3. Functionally, catalyzes the dehydration of D-galactonate to 2-keto-3-deoxy-D-galactonate. The chain is D-galactonate dehydratase from Xanthomonas oryzae pv. oryzae (strain MAFF 311018).